Reading from the N-terminus, the 474-residue chain is Lipoprotein lipase (474 aa).

The N-terminal stretch at 1 to 27 is a signal peptide; that stretch reads MESKALLLVVLGVWLQSLTAFRGGVAA. The segment at 32-53 is interaction with GPIHBP1; it reads RDFSDIESKFALRTPEDTAEDT. Residues C54 and C67 are joined by a disulfide bond. N-linked (GlcNAc...) asparagine glycosylation is present at N70. The residue at position 121 (Y121) is a 3'-nitrotyrosine. Catalysis depends on S159, which acts as the Nucleophile. D183 serves as the catalytic Charge relay system. Y191 carries the 3'-nitrotyrosine modification. 4 residues coordinate Ca(2+): A194, R197, S199, and D202. Cysteines 243 and 266 form a disulfide. An essential for determining substrate specificity region spans residues 243–266; the sequence is CNIGEAIRVIAERGLGDVDQLVKC. Catalysis depends on H268, which acts as the Charge relay system. 2 cysteine pairs are disulfide-bonded: C291–C310 and C302–C305. One can recognise a PLAT domain in the interval 341–464; it reads FHYQVKIHFS…KGKDSAVFVK (124 aa). The residue at position 343 (Y343) is a 3'-nitrotyrosine. N-linked (GlcNAc...) asparagine glycosylation occurs at N386. The interval 417 to 421 is important for interaction with lipoprotein particles; sequence WPDWW. The important for heparin binding stretch occupies residues 430–434; the sequence is RIRVK. The tract at residues 443–467 is interaction with GPIHBP1; the sequence is IFCAREKVSHLQKGKDSAVFVKCHD. A disulfide bridge links C445 with C465.

The protein belongs to the AB hydrolase superfamily. Lipase family. In terms of assembly, homodimer. Interacts with GPIHBP1 with 1:1 stoichiometry. Interacts with APOC2; the interaction activates LPL activity in the presence of lipids. Interaction with heparan sulfate proteoglycans is required to protect LPL against loss of activity. Associates with lipoprotein particles in blood plasma. Interacts with LMF1 and SEL1L; interaction with SEL1L is required to prevent aggregation of newly synthesized LPL in the endoplasmic reticulum (ER), and for normal export of LPL from the ER to the extracellular space. Interacts with SORL1; SORL1 acts as a sorting receptor, promoting LPL localization to endosomes and later to lysosomes, leading to degradation of newly synthesized LPL. In terms of processing, tyrosine nitration after lipopolysaccharide (LPS) challenge down-regulates the lipase activity. Post-translationally, N-glycosylated. Detected in white and brown adipose tissue and heart muscle, especially at the lumenal surface of capillaries. Detected on capillary endothelium in the lactating mammary gland. Detected in blood plasma (at protein level). Expressed in liver, epididymal fat, heart, psoas muscle, lactating mammary gland, adrenal, lung, and ovary. Highest levels in heart and adrenal gland.

It is found in the cell membrane. The protein localises to the secreted. Its subcellular location is the extracellular space. It localises to the extracellular matrix. The catalysed reaction is a triacylglycerol + H2O = a diacylglycerol + a fatty acid + H(+). It carries out the reaction a 1,2-diacyl-sn-glycero-3-phosphocholine + H2O = a 2-acyl-sn-glycero-3-phosphocholine + a fatty acid + H(+). The enzyme catalyses 1,2,3-tri-(9Z-octadecenoyl)-glycerol + H2O = di-(9Z)-octadecenoylglycerol + (9Z)-octadecenoate + H(+). It catalyses the reaction 1,2-di-(9Z-octadecenoyl)-sn-glycero-3-phosphocholine + H2O = (9Z-octadecenoyl)-sn-glycero-3-phosphocholine + (9Z)-octadecenoate + H(+). The catalysed reaction is 1,2,3-tributanoylglycerol + H2O = dibutanoylglycerol + butanoate + H(+). It carries out the reaction 1,2-dihexadecanoyl-sn-glycero-3-phosphocholine + H2O = hexadecanoyl-sn-glycero-3-phosphocholine + hexadecanoate + H(+). The apolipoprotein APOC2 acts as a coactivator of LPL activity. Ca(2+) binding promotes protein stability and formation of the active homodimer. Interaction with GPIHBP1 protects LPL against inactivation by ANGPTL4. In terms of biological role, key enzyme in triglyceride metabolism. Catalyzes the hydrolysis of triglycerides from circulating chylomicrons and very low density lipoproteins (VLDL), and thereby plays an important role in lipid clearance from the blood stream, lipid utilization and storage. Although it has both phospholipase and triglyceride lipase activities it is primarily a triglyceride lipase with low but detectable phospholipase activity. Mediates margination of triglyceride-rich lipoprotein particles in capillaries. Recruited to its site of action on vascular endothelium by binding to GPIHBP1 and cell surface heparan sulfate proteoglycans. This chain is Lipoprotein lipase (Lpl), found in Mus musculus (Mouse).